The chain runs to 317 residues: Apolipoprotein E (317 aa).

The N-terminal stretch at 1–18 (MKVLWAALLVTFLAGCQA) is a signal peptide. Tandem repeats lie at residues 80–101 (TLMDETMKELKAYKSELEEQLS), 102–123 (PVAEETRARLSKELQAAQARLG), 124–145 (ADMEDVRSRLVQYRSEVQAMLG), 146–167 (QSTEELRARLASHLRKLRKRLL), 168–189 (RDADDLQKRLAVYQAGAREGAE), 190–211 (RGVSAIRERLGPLVEQGRVRAA), 212–233 (TVGSLASQPLQERAQALGERLR), and 234–255 (ARMEEMGSRTRDRLDEVKEQVA). The tract at residues 80-255 (TLMDETMKEL…RLDEVKEQVA (176 aa)) is 8 X 22 AA approximate tandem repeats. The residue at position 143 (methionine 143) is a Methionine sulfoxide. Serine 147 is modified (phosphoserine). Positions 158 to 168 (HLRKLRKRLLR) are LDL and other lipoprotein receptors binding. A heparin-binding site is contributed by 162–165 (LRKR). A lipid-binding and lipoprotein association region spans residues 210-290 (AATVGSLASQ…SWFEPLVEDM (81 aa)). 229 to 236 (GERLRARM) contacts heparin. Residues 266–317 (QQISLQAEAFQARLKSWFEPLVEDMQRQWAGLVEKVQAAVGASTAPVPIDNH) are homooligomerization. The interval 278 to 290 (RLKSWFEPLVEDM) is specificity for association with VLDL.

The protein belongs to the apolipoprotein A1/A4/E family. In terms of assembly, homotetramer. May interact with ABCA1; functionally associated with ABCA1 in the biogenesis of HDLs. May interact with APP/A4 amyloid-beta peptide; the interaction is extremely stable in vitro but its physiological significance is unclear. May interact with MAPT. May interact with MAP2. In the cerebrospinal fluid, interacts with secreted SORL1. Interacts with PMEL; this allows the loading of PMEL luminal fragment on ILVs to induce fibril nucleation. In terms of processing, APOE exists as multiple glycosylated and sialylated glycoforms within cells and in plasma. The extent of glycosylation and sialylation are tissue and context specific. Post-translationally, glycated in plasma VLDL. Phosphorylated by FAM20C in the extracellular medium.

It localises to the secreted. The protein resides in the extracellular space. The protein localises to the extracellular matrix. It is found in the extracellular vesicle. Its subcellular location is the endosome. It localises to the multivesicular body. APOE is an apolipoprotein, a protein associating with lipid particles, that mainly functions in lipoprotein-mediated lipid transport between organs via the plasma and interstitial fluids. APOE is a core component of plasma lipoproteins and is involved in their production, conversion and clearance. Apolipoproteins are amphipathic molecules that interact both with lipids of the lipoprotein particle core and the aqueous environment of the plasma. As such, APOE associates with chylomicrons, chylomicron remnants, very low density lipoproteins (VLDL) and intermediate density lipoproteins (IDL) but shows a preferential binding to high-density lipoproteins (HDL). It also binds a wide range of cellular receptors including the LDL receptor/LDLR, the LDL receptor-related proteins LRP1, LRP2 and LRP8 and the very low-density lipoprotein receptor/VLDLR that mediate the cellular uptake of the APOE-containing lipoprotein particles. Finally, APOE also has a heparin-binding activity and binds heparan-sulfate proteoglycans on the surface of cells, a property that supports the capture and the receptor-mediated uptake of APOE-containing lipoproteins by cells. A main function of APOE is to mediate lipoprotein clearance through the uptake of chylomicrons, VLDLs, and HDLs by hepatocytes. APOE is also involved in the biosynthesis by the liver of VLDLs as well as their uptake by peripheral tissues ensuring the delivery of triglycerides and energy storage in muscle, heart and adipose tissues. By participating in the lipoprotein-mediated distribution of lipids among tissues, APOE plays a critical role in plasma and tissues lipid homeostasis. APOE is also involved in two steps of reverse cholesterol transport, the HDLs-mediated transport of cholesterol from peripheral tissues to the liver, and thereby plays an important role in cholesterol homeostasis. First, it is functionally associated with ABCA1 in the biogenesis of HDLs in tissues. Second, it is enriched in circulating HDLs and mediates their uptake by hepatocytes. APOE also plays an important role in lipid transport in the central nervous system, regulating neuron survival and sprouting. This is Apolipoprotein E (APOE) from Macaca fascicularis (Crab-eating macaque).